The sequence spans 54 residues: Large ribosomal subunit protein bL33 (54 aa).

It belongs to the bacterial ribosomal protein bL33 family.

This is Large ribosomal subunit protein bL33 from Legionella pneumophila (strain Lens).